Reading from the N-terminus, the 278-residue chain is TnpB-like protein MJ0751 (278 aa).

Residues Cys-222, Cys-225, Cys-239, and Cys-242 each coordinate Zn(2+).

In the N-terminal section; belongs to the transposase 2 family. This sequence in the C-terminal section; belongs to the transposase 35 family.

The polypeptide is TnpB-like protein MJ0751 (Methanocaldococcus jannaschii (strain ATCC 43067 / DSM 2661 / JAL-1 / JCM 10045 / NBRC 100440) (Methanococcus jannaschii)).